The sequence spans 382 residues: Mannitol-1-phosphate 5-dehydrogenase (382 aa).

Residue 3-14 (ALHFGAGNIGRG) coordinates NAD(+).

Belongs to the mannitol dehydrogenase family.

It carries out the reaction D-mannitol 1-phosphate + NAD(+) = beta-D-fructose 6-phosphate + NADH + H(+). This chain is Mannitol-1-phosphate 5-dehydrogenase, found in Tolumonas auensis (strain DSM 9187 / NBRC 110442 / TA 4).